We begin with the raw amino-acid sequence, 535 residues long: Sucrose transport protein SUT5 (535 aa).

The Cytoplasmic portion of the chain corresponds to 1–53 (MEEGRRGDREGKSAAGWTALSTTKTTLEEKRRLQANGSVGGDAGTSGFRRIVR). A helical transmembrane segment spans residues 54-74 (LFFACMVAGGIQYGWALQLSL). Residues 75–87 (LSPYSQTLGISHS) are Extracellular-facing. A helical membrane pass occupies residues 88–108 (YVSLTWICGPIAGFVVQPIVG). Residues 109-122 (YYSDRCTMKMGRRR) are Cytoplasmic-facing. Residues 123 to 143 (PFILVGCLIICISVMIIGFSA) traverse the membrane as a helical segment. Residues 144-163 (DIGRHLGDTKEHCSTYTGPR) are Extracellular-facing. Residues 164–184 (WSAAMVYIVGFWFLDFANNTV) traverse the membrane as a helical segment. Residues 185–203 (QGPARAMMADLSAGHHGPN) lie on the Cytoplasmic side of the membrane. A helical membrane pass occupies residues 204–224 (VGQSIFSLWMAIGSVLGYLSG). At 225 to 249 (ANGKWHEWFPWLKTAACCDACANLK) the chain is on the extracellular side. Residues 250–270 (GAFFTAVLLIVVSMTVTMYLA) traverse the membrane as a helical segment. Over 271-302 (DEMPLDKQDVDTSGGGGCAVFVDLFKSLRNLP) the chain is Cytoplasmic. A helical transmembrane segment spans residues 303 to 323 (PAMFKVLAVTAVTWLSWFPFI). The Extracellular portion of the chain corresponds to 324–354 (QYNTDWMGREIYHGEPQGTAAKADVYDAGVR). A helical transmembrane segment spans residues 355–375 (EGAMGLLFCSVALGVTSFVIP). Topologically, residues 376 to 384 (KLCRRLTSK) are cytoplasmic. Residues 385 to 405 (VVWSISNFLVFALMAVMVAVG) form a helical membrane-spanning segment. Residues 406 to 429 (MVSMRGYRPSLAAGLTGPDPTLKA) are Extracellular-facing. The chain crosses the membrane as a helical span at residues 430-450 (VALVVFALIGIPQAVLFSVPW). The Cytoplasmic segment spans residues 451-465 (AVASEVTAEEGGGQG). The chain crosses the membrane as a helical span at residues 466–486 (LAIGVLNIAIVVPQLVIALTA). Residues 487 to 498 (GPIDGAFNKGNT) are Extracellular-facing. The chain crosses the membrane as a helical span at residues 499-519 (PAFGIGGAFAFICGVLALIWL). Over 520-535 (PKTRGVSNAAVVAGGH) the chain is Cytoplasmic.

Belongs to the glycoside-pentoside-hexuronide (GPH) cation symporter transporter (TC 2.A.2.4) family. As to quaternary structure, homodimer. Widely expressed. Highest expression in sink leaves and lowest in germinating seeds.

Its subcellular location is the cell membrane. It functions in the pathway glycan biosynthesis; sucrose metabolism. In terms of biological role, responsible for the transport of sucrose into the cell, with the concomitant uptake of protons (symport system). Can also transport other glucosides such as maltose, arbutin, salicin, helicin, alpha-phenylglucoside and beta-phenylglucoside. In Oryza sativa subsp. japonica (Rice), this protein is Sucrose transport protein SUT5 (SUT5).